A 493-amino-acid chain; its full sequence is Lysine--tRNA ligase (493 aa).

2 residues coordinate Mg(2+): E402 and E409.

The protein belongs to the class-II aminoacyl-tRNA synthetase family. As to quaternary structure, homodimer. The cofactor is Mg(2+).

It localises to the cytoplasm. The catalysed reaction is tRNA(Lys) + L-lysine + ATP = L-lysyl-tRNA(Lys) + AMP + diphosphate. This chain is Lysine--tRNA ligase, found in Ureaplasma urealyticum serovar 10 (strain ATCC 33699 / Western).